A 114-amino-acid chain; its full sequence is Large ribosomal subunit protein uL22c (114 aa).

Belongs to the universal ribosomal protein uL22 family. Part of the 50S ribosomal subunit.

The protein resides in the plastid. It localises to the chloroplast. In terms of biological role, this protein binds specifically to 23S rRNA. Functionally, the globular domain of the protein is located near the polypeptide exit tunnel on the outside of the subunit, while an extended beta-hairpin is found that lines the wall of the exit tunnel in the center of the 70S ribosome. The sequence is that of Large ribosomal subunit protein uL22c (rpl22) from Gracilaria tenuistipitata var. liui (Red alga).